A 456-amino-acid chain; its full sequence is Histidine--tRNA ligase (456 aa).

Belongs to the class-II aminoacyl-tRNA synthetase family. Homodimer.

It localises to the cytoplasm. The enzyme catalyses tRNA(His) + L-histidine + ATP = L-histidyl-tRNA(His) + AMP + diphosphate + H(+). The protein is Histidine--tRNA ligase of Christiangramia forsetii (strain DSM 17595 / CGMCC 1.15422 / KT0803) (Gramella forsetii).